We begin with the raw amino-acid sequence, 294 residues long: uncharacterized protein (294 aa).

Residues 1-215 (MTTAITPDKK…DQDDDDQKDL (215 aa)) are disordered. 2 stretches are compositionally biased toward basic residues: residues 27–43 (TKPR…KSKK) and 50–78 (AKKR…KKAP). Residues 79 to 88 (MKAPSKPAAK) are compositionally biased toward low complexity. Residues 92 to 102 (QQAQASLQKPI) show a composition bias toward polar residues. A compositionally biased stretch (pro residues) spans 118 to 136 (PRPPTPIPPTGVKPEPAPR). Positions 145–160 (SVSSTTPRTSATTGTT) are enriched in low complexity.

This is an uncharacterized protein from Caenorhabditis elegans.